The primary structure comprises 488 residues: Cobyric acid synthase (488 aa).

The GATase cobBQ-type domain occupies 252–440 (VPLIAVLRFP…VHGLFANDRQ (189 aa)). C334 (nucleophile) is an active-site residue. H432 is a catalytic residue.

This sequence belongs to the CobB/CobQ family. CobQ subfamily.

The protein operates within cofactor biosynthesis; adenosylcobalamin biosynthesis. Functionally, catalyzes amidations at positions B, D, E, and G on adenosylcobyrinic A,C-diamide. NH(2) groups are provided by glutamine, and one molecule of ATP is hydrogenolyzed for each amidation. The protein is Cobyric acid synthase of Methylorubrum populi (strain ATCC BAA-705 / NCIMB 13946 / BJ001) (Methylobacterium populi).